The following is a 239-amino-acid chain: 1-(5-phosphoribosyl)-5-[(5-phosphoribosylamino)methylideneamino] imidazole-4-carboxamide isomerase (239 aa).

D8 (proton acceptor) is an active-site residue. D129 functions as the Proton donor in the catalytic mechanism.

The protein belongs to the HisA/HisF family.

The protein resides in the cytoplasm. The enzyme catalyses 1-(5-phospho-beta-D-ribosyl)-5-[(5-phospho-beta-D-ribosylamino)methylideneamino]imidazole-4-carboxamide = 5-[(5-phospho-1-deoxy-D-ribulos-1-ylimino)methylamino]-1-(5-phospho-beta-D-ribosyl)imidazole-4-carboxamide. It functions in the pathway amino-acid biosynthesis; L-histidine biosynthesis; L-histidine from 5-phospho-alpha-D-ribose 1-diphosphate: step 4/9. The sequence is that of 1-(5-phosphoribosyl)-5-[(5-phosphoribosylamino)methylideneamino] imidazole-4-carboxamide isomerase from Bacillus mycoides (strain KBAB4) (Bacillus weihenstephanensis).